Consider the following 428-residue polypeptide: Adenylosuccinate synthetase (428 aa).

Residues 12 to 18 (GDEGKGK) and 40 to 42 (GHT) contribute to the GTP site. Aspartate 13 (proton acceptor) is an active-site residue. 2 residues coordinate Mg(2+): aspartate 13 and glycine 40. IMP contacts are provided by residues 13 to 16 (DEGK), 38 to 41 (NAGH), threonine 130, arginine 144, glutamine 225, threonine 240, and arginine 304. Residue histidine 41 is the Proton donor of the active site. 300 to 306 (VTTGRAR) is a substrate binding site. Residues arginine 306, 332-334 (KID), and 414-416 (SVG) each bind GTP.

It belongs to the adenylosuccinate synthetase family. In terms of assembly, homodimer. Requires Mg(2+) as cofactor.

The protein resides in the cytoplasm. The enzyme catalyses IMP + L-aspartate + GTP = N(6)-(1,2-dicarboxyethyl)-AMP + GDP + phosphate + 2 H(+). Its pathway is purine metabolism; AMP biosynthesis via de novo pathway; AMP from IMP: step 1/2. Plays an important role in the de novo pathway of purine nucleotide biosynthesis. Catalyzes the first committed step in the biosynthesis of AMP from IMP. The chain is Adenylosuccinate synthetase from Clostridium botulinum (strain ATCC 19397 / Type A).